The sequence spans 160 residues: Endoribonuclease YbeY (160 aa).

Residues H121, H125, and H131 each contribute to the Zn(2+) site.

This sequence belongs to the endoribonuclease YbeY family. It depends on Zn(2+) as a cofactor.

It is found in the cytoplasm. Single strand-specific metallo-endoribonuclease involved in late-stage 70S ribosome quality control and in maturation of the 3' terminus of the 16S rRNA. This is Endoribonuclease YbeY from Syntrophus aciditrophicus (strain SB).